A 397-amino-acid chain; its full sequence is MDRCKENCVSRPVKSTVPFGPKRVLVTEQIPSQHPGSASSGQAQRVLCPSNSQRVPPQAQKPVAGQKPVLKQLPAASGPRPASRLSNPQKSEQPQPAASGNNSEKEQTSIQKTEDSKKRQWTLEDFDIGRPLGKGKFGNVYLAREKQSKFILALKVLFKVQLEKAGVEHQLRREVEIQSHLRHPNILRLYGYFHDATRVYLILEYAPLGTVYRELQKLSKFDEQRTATYITELANALSYCHSKRVIHRDIKPENLLLGSNGELKIADFGWSVHAPSSRRTTLCGTLDYQPPEMIEGRMHDEKVDLWSLGVLCYEFLVGMPPFEAHTYQETYRRISRVEFTFPDFVTEGARDLISRLLKHNSSQRLTLAEVLEHPWIKANSSKPPTGHNSKEATSKSS.

Positions 1–118 are disordered; the sequence is MDRCKENCVS…SIQKTEDSKK (118 aa). 2 stretches are compositionally biased toward polar residues: residues 29–55 and 84–102; these read QIPS…SQRV and RLSN…SGNN. Ser40 and Ser50 each carry phosphoserine. Basic and acidic residues predominate over residues 103–118; the sequence is SEKEQTSIQKTEDSKK. The 251-residue stretch at 126 to 376 folds into the Protein kinase domain; it reads FDIGRPLGKG…LAEVLEHPWI (251 aa). Residues Lys136, Lys155, and 203 to 206 contribute to the ATP site; that span reads LEYA. Asp249 serves as the catalytic Proton acceptor. A Glycyl lysine isopeptide (Lys-Gly) (interchain with G-Cter in SUMO2) cross-link involves residue Lys251. ATP is bound by residues 253–254 and Asp267; that span reads EN. An activation segment region spans residues 273-286; sequence HAPSSRRTTLCGTL. A phosphothreonine mark is found at Thr280 and Thr281. Ser335 carries the phosphoserine; by PKA and PAK modification. Residues 378–387 show a composition bias toward polar residues; sequence ANSSKPPTGH. Residues 378 to 397 form a disordered region; sequence ANSSKPPTGHNSKEATSKSS. A compositionally biased stretch (basic and acidic residues) spans 388–397; it reads NSKEATSKSS.

It belongs to the protein kinase superfamily. Ser/Thr protein kinase family. Aurora subfamily. In terms of assembly, part of a complex composed of NEDD9, AURKA and CTTN; within the complex NEDD9 acts as a scaffold protein and is required for complex formation. Identified in a complex with AUNIP and NIN. Interacts with CPEB1, JTB, TACC1, TPX2, PPP2CA, as well as with the protein phosphatase type 1 (PP1) isoforms PPP1CA, PPP1CB and PPP1CC. Also interacts with its substrates ARHGEF2, BORA, KIF2A, PARD3, and p53/TP53. Interaction with BORA promotes phosphorylation of PLK1. Interacts with FBXL7 and CIMAP3. Interacts with GADD45A, competing with its oligomerization. Interacts (via C-terminus) with AUNIP (via C-terminus). Interacts with SIRT2. Interacts with FRY; this interaction facilitates AURKA-mediated PLK1 phosphorylation. Interacts with MYCN; interaction is phospho-independent and triggers AURKA activation; AURKA competes with FBXW7 for binding to unphosphorylated MYCN but not for binding to phosphorylated MYCN. Interacts with HNRNPU. Interacts with AAAS. Interacts with KLHL18 and CUL3. Interacts with FOXP1. Interacts with HDAC6; AURKA-mediated phosphorylation of HDAC6 promotes deacetylation of alpha-tubulin. Post-translationally, activated by phosphorylation at Thr-281; this brings about a change in the conformation of the activation segment. Phosphorylation at Thr-281 varies during the cell cycle and is highest during M phase. Autophosphorylated at Thr-281 upon TPX2 binding. Thr-281 can be phosphorylated by several kinases, including PAK and PKA. Protein phosphatase type 1 (PP1) binds AURKA and inhibits its activity by dephosphorylating Thr-281 during mitosis. Phosphorylation at Ser-335 decreases the kinase activity. PPP2CA controls degradation by dephosphorylating Ser-52 at the end of mitosis. Phosphorylated in embryonic brain neurons. Ubiquitinated by CHFR, leading to its degradation by the proteasome. Ubiquitinated by the anaphase-promoting complex (APC), leading to its degradation by the proteasome. Ubiquitinated by the E3 ubiquitin-protein ligase complex SCF(FBXL7) during mitosis, leading to its degradation by the proteasome. Ubiquitinated by the CUL3-KLHL18 ligase leading to its activation at the centrosome which is required for initiating mitotic entry. Ubiquitination mediated by CUL3-KLHL18 ligase does not lead to its degradation by the proteasome. Detected in neurons in brain cortex and hippocampus (at protein level). Expressed in mammary gland and tumor.

It localises to the cytoplasm. The protein resides in the cytoskeleton. It is found in the microtubule organizing center. The protein localises to the centrosome. Its subcellular location is the spindle pole. It localises to the centriole. The protein resides in the cell projection. It is found in the neuron projection. The protein localises to the cilium. Its subcellular location is the cilium basal body. It localises to the basolateral cell membrane. It carries out the reaction L-seryl-[protein] + ATP = O-phospho-L-seryl-[protein] + ADP + H(+). The enzyme catalyses L-threonyl-[protein] + ATP = O-phospho-L-threonyl-[protein] + ADP + H(+). Activation of CDK1, appears to be an upstream event of AURKA activation. Phosphatase inhibitor-2 (PPP1R2) and TPX2 act also as activators. Inactivated by the G2 checkpoint. Inhibited by GADD45A and p53/TP53, and through dephosphorylation by protein phosphatase type 1 (PP1). MLN8054 is also a potent and selective inhibitor. Activated during the early phase of cilia disassembly in the presence of FBXL7 and CIMAP3. Inhibited by the small molecule inhibitor VX-680. In terms of biological role, mitotic serine/threonine kinase that contributes to the regulation of cell cycle progression. Associates with the centrosome and the spindle microtubules during mitosis and plays a critical role in various mitotic events including the establishment of mitotic spindle, centrosome duplication, centrosome separation as well as maturation, chromosomal alignment, spindle assembly checkpoint, and cytokinesis. Required for normal spindle positioning during mitosis and for the localization of NUMA1 and DCTN1 to the cell cortex during metaphase. Required for initial activation of CDK1 at centrosomes. Phosphorylates numerous target proteins, including ARHGEF2, BORA, BRCA1, CDC25B, DLGP5, HDAC6, KIF2A, LATS2, NDEL1, PARD3, PPP1R2, PLK1, RASSF1, TACC3, p53/TP53 and TPX2. Phosphorylates MCRS1 which is required for MCRS1-mediated kinetochore fiber assembly and mitotic progression. Regulates KIF2A tubulin depolymerase activity. Required for normal axon formation. Plays a role in microtubule remodeling during neurite extension. Important for microtubule formation and/or stabilization. Also acts as a key regulatory component of the p53/TP53 pathway, and particularly the checkpoint-response pathways critical for oncogenic transformation of cells, by phosphorylating and stabilizating p53/TP53. Phosphorylates its own inhibitors, the protein phosphatase type 1 (PP1) isoforms, to inhibit their activity. Inhibits cilia outgrowth. Required for cilia disassembly via phosphorylation of HDAC6 and subsequent deacetylation of alpha-tubulin. Regulates protein levels of the anti-apoptosis protein BIRC5 by suppressing the expression of the SCF(FBXL7) E3 ubiquitin-protein ligase substrate adapter FBXL7 through the phosphorylation of the transcription factor FOXP1. This is Aurora kinase A from Rattus norvegicus (Rat).